Here is an 838-residue protein sequence, read N- to C-terminus: V-type proton ATPase 116 kDa subunit a 1 (838 aa).

At 1–388 (MGELFRSEEM…DAYGIGTYRE (388 aa)) the chain is on the cytoplasmic side. Residues T250 and T360 each carry the phosphothreonine modification. Y364 carries the post-translational modification Phosphotyrosine. Residues 389–407 (INPAPYTIITFPFLFAVMF) traverse the membrane as a helical segment. At 408 to 409 (GD) the chain is on the vacuolar side. Residues 410–426 (LGHGILMTLFAVWMVLK) form a helical membrane-spanning segment. The Cytoplasmic portion of the chain corresponds to 427 to 441 (ESRILSQKNENEMFS). The helical transmembrane segment at 442–471 (TIFSGRYIILLMGVFSIYTGLIYNDCFSKS) threads the bilayer. Residues 472-535 (LNIFGSSWSV…ATNKLTFLNS (64 aa)) lie on the Vacuolar side of the membrane. Residues 536 to 555 (FKMKMSVILGIIHMLFGVSL) form a helical membrane-spanning segment. Residues 556 to 573 (SLFNHTYFKKPLNIYFGF) are Cytoplasmic-facing. A helical membrane pass occupies residues 574 to 594 (IPEIIFMTSLFGYLVILIFYK). Residues 595–639 (WTAYNAKTSEKAPSLLIHFINMFLFSYGDSGNSMLYSGQKGIQCF) are Vacuolar-facing. The chain crosses the membrane as a helical span at residues 640-659 (LVVVALLCVPWMLLFKPLVL). Residues 660-725 (RRQYLRRKHL…DTMVHQAIHT (66 aa)) lie on the Cytoplasmic side of the membrane. The chain crosses the membrane as a helical span at residues 726–750 (IEYCLGCISNTASYLRLWALSLAHA). Residues 751–771 (QLSEVLWTMVIHIGLKVKSLA) are Vacuolar-facing. The chain crosses the membrane as a helical span at residues 772 to 810 (GGLALFFIFAAFATLTVAILLIMEGLSAFLHALRLHWVE). The Cytoplasmic segment spans residues 811-838 (FQNKFYSGTGFKFLPFSFEHIREGKFDD).

Belongs to the V-ATPase 116 kDa subunit family. In terms of assembly, V-ATPase is a heteromultimeric enzyme made up of two complexes: the ATP-hydrolytic V1 complex and the proton translocation V0 complex. The V1 complex consists of three catalytic AB heterodimers that form a heterohexamer, three peripheral stalks each consisting of EG heterodimers, one central rotor including subunits D and F, and the regulatory subunits C and H. The proton translocation complex V0 consists of the proton transport subunit a, a ring of proteolipid subunits c9c'', rotary subunit d, subunits e and f, and the accessory subunits ATP6AP1/Ac45 and ATP6AP2/PRR. Interacts with SPAAR. In terms of tissue distribution, expressed in brain (at protein level). As to expression, expressed heart, kidney, liver, spleen, and to a lesser extent in brain.

The protein localises to the cytoplasmic vesicle. It localises to the clathrin-coated vesicle membrane. The protein resides in the secretory vesicle. It is found in the synaptic vesicle membrane. Its subcellular location is the melanosome. In terms of biological role, subunit of the V0 complex of vacuolar(H+)-ATPase (V-ATPase), a multisubunit enzyme composed of a peripheral complex (V1) that hydrolyzes ATP and a membrane integral complex (V0) that translocates protons. V-ATPase is responsible for the acidification of various organelles, such as lysosomes, endosomes, the trans-Golgi network, and secretory granules, including synaptic vesicles. In certain cell types, can be exported to the plasma membrane, where it is involved in the acidification of the extracellular environment. Required for assembly and activity of the vacuolar ATPase. Through its action on compartment acidification, plays an essential role in neuronal development in terms of integrity and connectivity of neurons. This Bos taurus (Bovine) protein is V-type proton ATPase 116 kDa subunit a 1 (ATP6V0A1).